Consider the following 88-residue polypeptide: Eclosion hormone (88 aa).

The N-terminal stretch at 1–26 is a signal peptide; that stretch reads MANKLTAVIVVALAVAFMVNLDYANC. 3 disulfide bridges follow: Cys40–Cys64, Cys44–Cys60, and Cys47–Cys75.

It belongs to the insect eclosion hormone family.

It localises to the secreted. Functionally, neuropeptide that triggers the performance of ecdysis behaviors at the end of a molt. It triggers adult behavior patterns: larval, pupal and adult ecdysis, and plasticization during the molt. In Bombyx mori (Silk moth), this protein is Eclosion hormone.